Consider the following 197-residue polypeptide: Protein tyrosine phosphatase receptor type C-associated protein (197 aa).

The chain crosses the membrane as a helical span at residues 33–53; sequence VVTIVLLLLLLLLLVTALALA. Phosphoserine is present on residues serine 99 and serine 103. Disordered regions lie at residues 120–164 and 177–197; these read GPEE…GSSA and SAAW…VTAL. The segment covering 124–145 has biased composition (basic and acidic residues); that stretch reads AAAKEEEQRCQAEQTRDPRDTD.

Interacts with CD45/PTPRC. In terms of processing, phosphorylated on tyrosine residues. In terms of tissue distribution, leukocyte-specific. Expressed in B- and T-cell lines, in spleen, thymus, and bone marrow of adult mice, and in embryos.

Its subcellular location is the membrane. This Mus musculus (Mouse) protein is Protein tyrosine phosphatase receptor type C-associated protein (Ptprcap).